The chain runs to 580 residues: Probable glucomannan 4-beta-mannosyltransferase 2 (580 aa).

Positions 1–12 are enriched in polar residues; it reads MSTNGGAPSQKR. A disordered region spans residues 1-33; it reads MSTNGGAPSQKRSWLPSRPLLTTTTQTYPPPLL. Residues 15 to 27 show a composition bias toward low complexity; it reads LPSRPLLTTTTQT. The helical transmembrane segment at 85–105 threads the bilayer; sequence AVWACLAMSAMLVAEAAWMGL. Residue D182 is part of the active site. Residues D241 and D243 each coordinate substrate. D335 is a catalytic residue. 4 helical membrane passes run 414-434, 437-457, 528-548, and 554-574; these read AIAPILTFLFYCIVIPLSAMV, VTIPVWGLVYIPTAITIMNAI, IYIPELLLALYLLICASYDFV, and YYIYIYLQAVAFTVMGFGFVG.

It belongs to the glycosyltransferase 2 family. Plant cellulose synthase-like A subfamily.

The protein localises to the golgi apparatus membrane. It catalyses the reaction GDP-mannose + (glucomannan)n = GDP + (glucomannan)n+1.. Its function is as follows. Probable mannan synthase which consists of a 4-beta-mannosyltransferase activity on mannan using GDP-mannose. The beta-1,4-mannan product is the backbone for galactomannan synthesis by galactomannan galactosyltransferase. Galactomannan is a noncellulosic polysaccharides of plant cell wall. The protein is Probable glucomannan 4-beta-mannosyltransferase 2 of Oryza sativa subsp. japonica (Rice).